An 806-amino-acid chain; its full sequence is Hyperosmolality-gated Ca2+ permeable channel 1.8 (806 aa).

10 consecutive transmembrane segments (helical) span residues 7 to 27 (IGVS…AFAV), 102 to 122 (IYTL…VVLV), 157 to 177 (KFFF…FMLY), 375 to 395 (LVIG…IAFV), 427 to 447 (FLPG…LLIM), 467 to 487 (YYYF…TAFE), 512 to 532 (ATFF…GEIL), 576 to 596 (FLLG…ILIF), 626 to 646 (VHGR…GLLA), and 650 to 670 (AADS…FHKY). Positions 726–786 (SSSSSSEKET…HYASAYEQSS (61 aa)) are disordered. Residues 731-750 (SEKETHQEETPEVRVDKHET) show a composition bias toward basic and acidic residues. Thr735 bears the Phosphothreonine mark. Positions 751–762 (QSSSPVTELGTS) are enriched in polar residues. The segment covering 775–786 (SSHYASAYEQSS) has biased composition (low complexity).

Belongs to the CSC1 (TC 1.A.17) family.

The protein resides in the golgi apparatus membrane. It localises to the cell membrane. Its function is as follows. Acts as an osmosensitive calcium-permeable cation channel. This chain is Hyperosmolality-gated Ca2+ permeable channel 1.8, found in Arabidopsis thaliana (Mouse-ear cress).